Here is a 330-residue protein sequence, read N- to C-terminus: tRNA (cytosine(38)-C(5))-methyltransferase (330 aa).

An SAM-dependent MTase C5-type domain is found at 7-330 (LRVLELYSGI…ISLLLEPLNF (324 aa)). The active site involves C81.

It belongs to the class I-like SAM-binding methyltransferase superfamily. C5-methyltransferase family.

It is found in the cytoplasm. The protein localises to the nucleus. The enzyme catalyses cytidine(38) in tRNA + S-adenosyl-L-methionine = 5-methylcytidine(38) in tRNA + S-adenosyl-L-homocysteine + H(+). Functionally, specifically methylates cytosine 38 in the anticodon loop of tRNA(Asp). Can also methylate cytosine 38 in tRNA(Glu), albeit to a lower level, but not tRNA(Lys). Pmt1-dependent tRNA methylation is induced by nitrogen limitation and depends on the nutrient-sensing protein kinase sck2. Does not have DNA-methylation activity. This chain is tRNA (cytosine(38)-C(5))-methyltransferase (pmt1), found in Schizosaccharomyces pombe (strain 972 / ATCC 24843) (Fission yeast).